The sequence spans 1187 residues: Intraflagellar transport protein 122 homolog (1187 aa).

WD repeat units follow at residues Lys-16–Pro-54, Gly-57–Thr-97, Asn-99–His-135, Val-137–Ile-175, Gly-180–Asp-223, Ser-225–Ile-264, Glu-266–Tyr-306, and Lys-459–Gln-498. Residues Lys-1070–Asp-1094 form a disordered region.

In terms of assembly, component of the IFT complex A (IFT-A) complex.

It localises to the cell projection. It is found in the cilium. Its subcellular location is the cytoplasm. The protein resides in the cytoskeleton. The protein localises to the cilium basal body. In terms of biological role, required for cilia formation during embryonal development. Acts as a negative regulator of Shh signaling. The chain is Intraflagellar transport protein 122 homolog (ift122) from Danio rerio (Zebrafish).